The sequence spans 165 residues: SsrA-binding protein (165 aa).

Over residues Q135–R158 the composition is skewed to basic and acidic residues. The interval Q135–S165 is disordered.

This sequence belongs to the SmpB family.

Its subcellular location is the cytoplasm. In terms of biological role, required for rescue of stalled ribosomes mediated by trans-translation. Binds to transfer-messenger RNA (tmRNA), required for stable association of tmRNA with ribosomes. tmRNA and SmpB together mimic tRNA shape, replacing the anticodon stem-loop with SmpB. tmRNA is encoded by the ssrA gene; the 2 termini fold to resemble tRNA(Ala) and it encodes a 'tag peptide', a short internal open reading frame. During trans-translation Ala-aminoacylated tmRNA acts like a tRNA, entering the A-site of stalled ribosomes, displacing the stalled mRNA. The ribosome then switches to translate the ORF on the tmRNA; the nascent peptide is terminated with the 'tag peptide' encoded by the tmRNA and targeted for degradation. The ribosome is freed to recommence translation, which seems to be the essential function of trans-translation. The protein is SsrA-binding protein of Mycolicibacterium vanbaalenii (strain DSM 7251 / JCM 13017 / BCRC 16820 / KCTC 9966 / NRRL B-24157 / PYR-1) (Mycobacterium vanbaalenii).